Consider the following 604-residue polypeptide: Nuclear cap-binding protein subunit 3 (604 aa).

Positions 1–36 (MAAVRGLRISVKAEATATTAEPRGPEPEPMEVEEGE) are disordered. The RNA recognition motif (RRM) domain stretch occupies residues 116–177 (DTIYICGVDE…MSSFPDQEKP (62 aa)). A WLDD motif; essential for 7-methylguanosine-containing mRNA cap binding motif is present at residues 145-148 (WLDD). Disordered regions lie at residues 168–219 (MSSF…DIEL), 319–383 (KHRH…DSDE), and 457–604 (QNNN…DTES). The span at 173-198 (DQEKPKGGENNEEKTAEKNKKEKQEE) shows a compositional bias: basic and acidic residues. Acidic residues-rich tracts occupy residues 199–219 (STDD…DIEL) and 331–349 (EPIE…DEDD). Positions 350–370 (RVVVEYRDDLQPFKQSRDRGA) are enriched in basic and acidic residues. Over residues 458-469 (NNNGLRQPNSIV) the composition is skewed to polar residues. Basic and acidic residues-rich tracts occupy residues 495–505 (PRREPISDVHS), 539–548 (TQEKTSDKPE), and 569–582 (IKEK…KSRL). The span at 595–604 (ESSSGSDTES) shows a compositional bias: low complexity.

This sequence belongs to the NCBP3 family. In terms of assembly, component of an alternative cap-binding complex (CBC) composed of NCBP1/CBP80 and NCBP3.

Its subcellular location is the nucleus. The protein localises to the cytoplasm. In terms of biological role, associates with NCBP1/CBP80 to form an alternative cap-binding complex (CBC) which plays a key role in mRNA export. NCBP3 serves as adapter protein linking the capped RNAs (m7GpppG-capped RNA) to NCBP1/CBP80. Unlike the conventional CBC with NCBP2 which binds both small nuclear RNA (snRNA) and messenger (mRNA) and is involved in their export from the nucleus, the alternative CBC with NCBP3 does not bind snRNA and associates only with mRNA thereby playing a role in only mRNA export. The sequence is that of Nuclear cap-binding protein subunit 3 from Gallus gallus (Chicken).